The primary structure comprises 264 residues: 3-methyl-2-oxobutanoate hydroxymethyltransferase (264 aa).

The Mg(2+) site is built by aspartate 45 and aspartate 84. Residues 45-46 (DS), aspartate 84, and lysine 113 each bind 3-methyl-2-oxobutanoate. Position 115 (glutamate 115) interacts with Mg(2+). The Proton acceptor role is filled by glutamate 182.

This sequence belongs to the PanB family. In terms of assembly, homodecamer; pentamer of dimers. Mg(2+) is required as a cofactor.

The protein localises to the cytoplasm. The enzyme catalyses 3-methyl-2-oxobutanoate + (6R)-5,10-methylene-5,6,7,8-tetrahydrofolate + H2O = 2-dehydropantoate + (6S)-5,6,7,8-tetrahydrofolate. Its pathway is cofactor biosynthesis; (R)-pantothenate biosynthesis; (R)-pantoate from 3-methyl-2-oxobutanoate: step 1/2. Catalyzes the reversible reaction in which hydroxymethyl group from 5,10-methylenetetrahydrofolate is transferred onto alpha-ketoisovalerate to form ketopantoate. This Nitrosococcus oceani (strain ATCC 19707 / BCRC 17464 / JCM 30415 / NCIMB 11848 / C-107) protein is 3-methyl-2-oxobutanoate hydroxymethyltransferase.